The sequence spans 373 residues: Chaperone protein DnaJ (373 aa).

One can recognise a J domain in the interval Asp5 to Gly69. The CR-type zinc finger occupies Gly130–Thr212. 8 residues coordinate Zn(2+): Cys143, Cys146, Cys160, Cys163, Cys186, Cys189, Cys200, and Cys203. 4 CXXCXGXG motif repeats span residues Cys143–Gly150, Cys160–Gly167, Cys186–Gly193, and Cys200–Gly207.

Belongs to the DnaJ family. As to quaternary structure, homodimer. The cofactor is Zn(2+).

The protein resides in the cytoplasm. Its function is as follows. Participates actively in the response to hyperosmotic and heat shock by preventing the aggregation of stress-denatured proteins and by disaggregating proteins, also in an autonomous, DnaK-independent fashion. Unfolded proteins bind initially to DnaJ; upon interaction with the DnaJ-bound protein, DnaK hydrolyzes its bound ATP, resulting in the formation of a stable complex. GrpE releases ADP from DnaK; ATP binding to DnaK triggers the release of the substrate protein, thus completing the reaction cycle. Several rounds of ATP-dependent interactions between DnaJ, DnaK and GrpE are required for fully efficient folding. Also involved, together with DnaK and GrpE, in the DNA replication of plasmids through activation of initiation proteins. This Staphylococcus epidermidis (strain ATCC 12228 / FDA PCI 1200) protein is Chaperone protein DnaJ.